The sequence spans 859 residues: Envelope glycoprotein (859 aa).

A propeptide spanning residues Met1–Phe6 is cleaved from the precursor. Topologically, residues Tyr7–Trp614 are extracellular. 14 N-linked (GlcNAc...) asparagine; by host glycosylation sites follow: Asn40, Asn112, Asn141, Asn148, Asn186, Asn214, Asn233, Asn244, Asn313, Asn340, Asn368, Asn399, Asn406, and Asn411. The segment at Phe446–Thr466 is fusion peptide. N-linked (GlcNAc...) asparagine; by host glycosylation is found at Asn483 and Asn490. Residues Leu498–Thr513 form an immunosuppression region. N-linked (GlcNAc...) asparagine; by host glycans are attached at residues Asn550 and Asn557. Coiled-coil stretches lie at residues Ile576–Lys624 and Lys663–Gln699. The chain crosses the membrane as a helical span at residues Ile615–Leu635. At Leu636–Val859 the chain is on the cytoplasmic side.

In terms of assembly, the mature envelope protein (Env) consists of a trimer of SU-TM heterodimers attached by noncovalent interactions or by a labile interchain disulfide bond. In terms of processing, specific enzymatic cleavages in vivo yield mature proteins. Envelope glycoproteins are synthesized as an inactive precursor that is N-glycosylated and processed likely by host cell furin or by a furin-like protease in the Golgi to yield the mature SU and TM proteins. The cleavage site between SU and TM requires the minimal sequence [KR]-X-[KR]-R.

Its subcellular location is the virion membrane. It is found in the host cell membrane. In terms of biological role, the surface protein (SU) attaches the virus to the host cell by binding to its receptor. This interaction triggers the refolding of the transmembrane protein (TM) and is thought to activate its fusogenic potential by unmasking its fusion peptide. Fusion occurs at the host cell plasma membrane. Its function is as follows. The transmembrane protein (TM) acts as a class I viral fusion protein. Under the current model, the protein has at least 3 conformational states: pre-fusion native state, pre-hairpin intermediate state, and post-fusion hairpin state. During viral and target cell membrane fusion, the coiled coil regions (heptad repeats) assume a trimer-of-hairpins structure, positioning the fusion peptide in close proximity to the C-terminal region of the ectodomain. The formation of this structure appears to drive apposition and subsequent fusion of viral and target cell membranes. Membranes fusion leads to delivery of the nucleocapsid into the cytoplasm. This chain is Envelope glycoprotein (env), found in Equus asinus (Donkey).